The sequence spans 1017 residues: Ubiquitin-like modifier-activating enzyme 1 (1017 aa).

Repeat copies occupy residues 26-163 and 419-571. Residues 26–571 form a 2 approximate repeats region; sequence SHETMKKITS…GTKGNTQVVV (546 aa). ATP contacts are provided by residues Ala-438, Asp-464, Arg-475, Lys-488, and 536 to 537; that span reads DN. Cys-592 (glycyl thioester intermediate) is an active-site residue. Polar residues predominate over residues 765–781; sequence IQTSENEPAPSSNTQQA. The interval 765-788 is disordered; the sequence is IQTSENEPAPSSNTQQAGGDAEDD.

Belongs to the ubiquitin-activating E1 family. As to quaternary structure, monomer.

The catalysed reaction is ATP + ubiquitin + [E1 ubiquitin-activating enzyme]-L-cysteine = AMP + diphosphate + S-ubiquitinyl-[E1 ubiquitin-activating enzyme]-L-cysteine.. It participates in protein modification; protein ubiquitination. Its function is as follows. Catalyzes the first step in ubiquitin conjugation to mark cellular proteins for degradation through the ubiquitin-proteasome system. Activates ubiquitin by first adenylating its C-terminal glycine residue with ATP, and thereafter linking this residue to the side chain of a cysteine residue in E1, yielding a ubiquitin-E1 thioester and free AMP. In Dictyostelium discoideum (Social amoeba), this protein is Ubiquitin-like modifier-activating enzyme 1 (uba1).